Consider the following 1198-residue polypeptide: Phosphatidylinositol-3,5-bisphosphate 3-phosphatase MTMR3 (1198 aa).

A Phosphoserine modification is found at serine 8. Residues 155–576 (EHVTSRFKNE…RNLMLWSAVY (422 aa)) form the Myotubularin phosphatase domain. Positions 265–280 (SRSSGSKLSTRNTSRD) are enriched in polar residues. A disordered region spans residues 265–285 (SRSSGSKLSTRNTSRDFPNGG). A 1,2-diacyl-sn-glycero-3-phospho-(1D-myo-inositol-3,5-bisphosphate)-binding residues include asparagine 326, asparagine 351, and isoleucine 352. A 1,2-diacyl-sn-glycero-3-phospho-(1D-myo-inositol-3-phosphate)-binding residues include asparagine 326, asparagine 351, and isoleucine 352. Catalysis depends on cysteine 413, which acts as the Phosphocysteine intermediate. 8 residues coordinate a 1,2-diacyl-sn-glycero-3-phospho-(1D-myo-inositol-3,5-bisphosphate): serine 414, aspartate 415, glycine 416, tryptophan 417, aspartate 418, arginine 419, lysine 455, and arginine 459. Residues serine 414, aspartate 415, glycine 416, tryptophan 417, aspartate 418, and arginine 419 each contribute to the a 1,2-diacyl-sn-glycero-3-phospho-(1D-myo-inositol-3-phosphate) site. An a 1,2-diacyl-sn-glycero-3-phospho-(1D-myo-inositol-3-phosphate)-binding site is contributed by arginine 459. A disordered region spans residues 590–612 (CAPYPAPGTSPDDPPLSRLPKTR). The span at 593–603 (YPAPGTSPDDP) shows a compositional bias: pro residues. A phosphoserine mark is found at serine 613, serine 633, serine 647, and serine 651. Disordered regions lie at residues 650–669 (LSSL…LGKP), 716–735 (EGKE…PEAS), and 855–891 (KSVS…SLVE). The segment covering 716–732 (EGKEDPLLEKESRRKTP) has biased composition (basic and acidic residues). At threonine 731 the chain carries Phosphothreonine. Serine 906 and serine 909 each carry phosphoserine. 2 disordered regions span residues 933–974 (ETEN…SRQL) and 993–1019 (WLHS…DDDG). Polar residues predominate over residues 999–1010 (GRPSATSSPDQP). The stretch at 1029 to 1062 (QRLRQIESGHQQEVETLKKQVQELKSRLESQYLT) forms a coiled coil. Phosphoserine is present on serine 1064. The FYVE-type zinc-finger motif lies at 1119-1179 (DHLAAHCYAC…VCKSCYSSLH (61 aa)). Residues cysteine 1125, cysteine 1128, cysteine 1141, cysteine 1144, cysteine 1149, cysteine 1152, cysteine 1171, and cysteine 1174 each coordinate Zn(2+).

This sequence belongs to the protein-tyrosine phosphatase family. Non-receptor class myotubularin subfamily. In terms of assembly, forms heterodimers with MTMR4 that recruit both CEP55 and PLK1; occurs during early mitosis, regulates the phosphorylation of CEP55 by PLK1 and its recruitment to the midbody where it mediates cell abscission. Phosphorylated by CDK1 during mitosis.

Its subcellular location is the cytoplasm. The protein localises to the cytosol. It localises to the membrane. The enzyme catalyses a 1,2-diacyl-sn-glycero-3-phospho-(1D-myo-inositol-3,5-bisphosphate) + H2O = a 1,2-diacyl-sn-glycero-3-phospho-(1D-myo-inositol-5-phosphate) + phosphate. The catalysed reaction is a 1,2-diacyl-sn-glycero-3-phospho-(1D-myo-inositol-3-phosphate) + H2O = a 1,2-diacyl-sn-glycero-3-phospho-(1D-myo-inositol) + phosphate. It catalyses the reaction 1,2-dihexadecanoyl-sn-glycero-3-phospho-(1D-myo-inositol-3-phosphate) + H2O = 1,2-dihexadecanoyl-sn-glycero-3-phospho-(1D-myo-inositol) + phosphate. It carries out the reaction 1,2-dioctanoyl-sn-glycero-3-phospho-(1-D-myo-inositol-3-phosphate) + H2O = 1,2-dioctanoyl-sn-glycero-3-phospho-(1D-myo-inositol) + phosphate. The enzyme catalyses 1,2-dihexadecanoyl-sn-glycero-3-phospho-(1D-myo-inositol-3,5-phosphate) + H2O = 1,2-dihexadecanoyl-sn-glycero-3-phospho-(1D-myo-inositol-5-phosphate) + phosphate. Its function is as follows. Lipid phosphatase that specifically dephosphorylates the D-3 position of phosphatidylinositol 3-phosphate and phosphatidylinositol 3,5-bisphosphate, generating phosphatidylinositol and phosphatidylinositol 5-phosphate. Decreases the levels of phosphatidylinositol 3-phosphate, a phospholipid found in cell membranes where it acts as key regulator of both cell signaling and intracellular membrane traffic. Could also have a molecular sequestering/adapter activity and regulate biological processes independently of its phosphatase activity. It includes the regulation of midbody abscission during mitotic cytokinesis. In Homo sapiens (Human), this protein is Phosphatidylinositol-3,5-bisphosphate 3-phosphatase MTMR3.